The primary structure comprises 248 residues: tRNA (guanine-N(1)-)-methyltransferase (248 aa).

S-adenosyl-L-methionine is bound by residues glycine 113 and 133–138 (IGDYVL).

This sequence belongs to the RNA methyltransferase TrmD family. In terms of assembly, homodimer.

The protein localises to the cytoplasm. It catalyses the reaction guanosine(37) in tRNA + S-adenosyl-L-methionine = N(1)-methylguanosine(37) in tRNA + S-adenosyl-L-homocysteine + H(+). Specifically methylates guanosine-37 in various tRNAs. The chain is tRNA (guanine-N(1)-)-methyltransferase from Shewanella loihica (strain ATCC BAA-1088 / PV-4).